We begin with the raw amino-acid sequence, 208 residues long: ATP-dependent Clp protease proteolytic subunit (208 aa).

The active-site Nucleophile is S105. H130 is an active-site residue.

The protein belongs to the peptidase S14 family. In terms of assembly, fourteen ClpP subunits assemble into 2 heptameric rings which stack back to back to give a disk-like structure with a central cavity, resembling the structure of eukaryotic proteasomes.

The protein localises to the cytoplasm. The enzyme catalyses Hydrolysis of proteins to small peptides in the presence of ATP and magnesium. alpha-casein is the usual test substrate. In the absence of ATP, only oligopeptides shorter than five residues are hydrolyzed (such as succinyl-Leu-Tyr-|-NHMec, and Leu-Tyr-Leu-|-Tyr-Trp, in which cleavage of the -Tyr-|-Leu- and -Tyr-|-Trp bonds also occurs).. In terms of biological role, cleaves peptides in various proteins in a process that requires ATP hydrolysis. Has a chymotrypsin-like activity. Plays a major role in the degradation of misfolded proteins. This chain is ATP-dependent Clp protease proteolytic subunit, found in Xylella fastidiosa (strain M12).